The primary structure comprises 435 residues: tRNA modification GTPase MnmE (435 aa).

Positions 20, 77, and 117 each coordinate (6S)-5-formyl-5,6,7,8-tetrahydrofolate. The region spanning 214–359 is the TrmE-type G domain; sequence GIKVVIVGVP…FLKEIESFCL (146 aa). GTP contacts are provided by residues 224–229, 243–249, and 268–271; these read NSGKSS, TEEEGTT, and DTAG. The Mg(2+) site is built by serine 228 and threonine 249. Lysine 435 provides a ligand contact to (6S)-5-formyl-5,6,7,8-tetrahydrofolate.

This sequence belongs to the TRAFAC class TrmE-Era-EngA-EngB-Septin-like GTPase superfamily. TrmE GTPase family. As to quaternary structure, homodimer. Heterotetramer of two MnmE and two MnmG subunits. The cofactor is K(+).

The protein resides in the cytoplasm. Exhibits a very high intrinsic GTPase hydrolysis rate. Involved in the addition of a carboxymethylaminomethyl (cmnm) group at the wobble position (U34) of certain tRNAs, forming tRNA-cmnm(5)s(2)U34. The chain is tRNA modification GTPase MnmE from Bartonella bacilliformis (strain ATCC 35685 / KC583 / Herrer 020/F12,63).